We begin with the raw amino-acid sequence, 352 residues long: MREMGEKRRRGHLNPAGFAGGLHDHEEKKNEEHKLDMSGMSMDALPHLTMSLGQVTILDLSNNNLESIPESIIARLLNVVVLDVRSNQLKSLPNSIGCLSKLKVLNVSGNLLESLPNTIEECRALEELHANFNELTKLPDTLGFELHSLRKLSVNSNKLAQLPSSTSHMTALRALDARLNCLRALPDGLENLANLEALNVSQNFQFLRELPYAVGLLASLRELDVSYNSIAALPDSMGCLTKLARFSAVGNPLVSPPMDVVEQGLDAMRAYLTARMNGGDGKRKKKAWLPKLVKYSTFTARMTPGRTRVHENTEGLLMSDYRSLNGIASPRFLTMLSPRRLFSPRRNSPKHC.

The segment at 1–25 (MREMGEKRRRGHLNPAGFAGGLHDH) is disordered. 10 LRR repeats span residues 29 to 52 (KNEEHKLDMSGMSMDALPHLTMSL), 53 to 75 (GQVTILDLSNNNLESIPESIIAR), 77 to 99 (LNVVVLDVRSNQLKSLPNSIGCL), 100 to 122 (SKLKVLNVSGNLLESLPNTIEEC), 124 to 146 (ALEELHANFNELTKLPDTLGFEL), 147 to 169 (HSLRKLSVNSNKLAQLPSSTSHM), 171 to 192 (ALRALDARLNCLRALPDGLENL), 195 to 217 (LEALNVSQNFQFLRELPYAVGLL), 218 to 241 (ASLRELDVSYNSIAALPDSMGCLT), and 243 to 263 (LARFSAVGNPLVSPPMDVVEQ). The GVYW; degenerate motif lies at 264-271 (GLDAMRAY).

Belongs to the SHOC2 family. In terms of tissue distribution, widely expressed but at a lower level in seedlings and stems.

Functionally, leucine-rich repeat protein that likely mediates protein interactions, possibly in the context of signal transduction. The sequence is that of Plant intracellular Ras-group-related LRR protein 1 (IRL1) from Oryza sativa subsp. japonica (Rice).